The chain runs to 758 residues: Vitamin K-dependent gamma-carboxylase (758 aa).

The interval 1–22 is disordered; sequence MAVSAGSARTSPSSDKVQKDKA. Alanine 2 is modified (N-acetylalanine). Residues 2–60 are Cytoplasmic-facing; it reads AVSAGSARTSPSSDKVQKDKAELISGPRQDSRIGKLLGFEWTDLSSWRRLVTLLNRPTD. Residues 61 to 81 traverse the membrane as a helical segment; that stretch reads PASLAVFRFLFGFLMVLDIPQ. The Lumenal portion of the chain corresponds to 82–113; the sequence is ERGLSSLDRKYLDGLDVCRFPLLDALRPLPLD. Residues cysteine 99 and cysteine 450 are joined by a disulfide bond. Residues 114-134 traverse the membrane as a helical segment; it reads WMYLVYTIMFLGALGMMLGLC. Residues 135–136 lie on the Cytoplasmic side of the membrane; sequence YR. The helical transmembrane segment at 137-157 threads the bilayer; the sequence is ISCVLFLLPYWYVFLLDKTSW. Residues 158–292 lie on the Lumenal side of the membrane; that stretch reads NNHSYLYGLL…VSYFHCMNSQ (135 aa). Residue lysine 218 is the Proton acceptor of the active site. A helical membrane pass occupies residues 293 to 313; that stretch reads LFSIGMFSYVMLASSPLFCSP. At 314–361 the chain is on the cytoplasmic side; sequence EWPRKLVSYCPRRLQQLLPLKAAPQPSVSCVYKRSRGKSGQKPGLRHQ. The chain crosses the membrane as a helical span at residues 362 to 382; sequence LGAAFTLLYLLEQLFLPYSHF. Residues 383–758 are Lumenal-facing; it reads LTQGYNNWTN…SNPDPVHSEF (376 aa). 2 N-linked (GlcNAc...) asparagine glycosylation sites follow: asparagine 459 and asparagine 550. The interval 732-758 is disordered; it reads GELNPSNTDSSHSNPPESNPDPVHSEF. A compositionally biased stretch (polar residues) spans 735–747; the sequence is NPSNTDSSHSNPP.

Belongs to the vitamin K-dependent gamma-carboxylase family. In terms of assembly, monomer. May interact with CALU.

Its subcellular location is the endoplasmic reticulum membrane. The enzyme catalyses 4-carboxy-L-glutamyl-[protein] + 2,3-epoxyphylloquinone + H2O + H(+) = phylloquinol + L-glutamyl-[protein] + CO2 + O2. Its function is as follows. Mediates the vitamin K-dependent carboxylation of glutamate residues to calcium-binding gamma-carboxyglutamate (Gla) residues with the concomitant conversion of the reduced hydroquinone form of vitamin K to vitamin K epoxide. Catalyzes gamma-carboxylation of various proteins, such as blood coagulation factors (F2, F7, F9 and F10), osteocalcin (BGLAP) or matrix Gla protein (MGP). In Homo sapiens (Human), this protein is Vitamin K-dependent gamma-carboxylase (GGCX).